Reading from the N-terminus, the 41-residue chain is Photosystem II reaction center protein Y (41 aa).

Residues 4–22 (LIVVVLPILAAVTWVVFNI) form a helical membrane-spanning segment.

This sequence belongs to the PsbY family. In terms of assembly, PSII is composed of 1 copy each of membrane proteins PsbA, PsbB, PsbC, PsbD, PsbE, PsbF, PsbH, PsbI, PsbJ, PsbK, PsbL, PsbM, PsbT, PsbX, PsbY, Psb30/Ycf12, peripheral proteins PsbO, CyanoQ (PsbQ), PsbU, PsbV and a large number of cofactors. It forms dimeric complexes.

It is found in the cellular thylakoid membrane. Loosely associated component of the core of photosystem II (PSII), it is not always seen in crystals. PSII is a light-driven water plastoquinone oxidoreductase, using light energy to abstract electrons from H(2)O, generating a proton gradient subsequently used for ATP formation. This chain is Photosystem II reaction center protein Y, found in Prochlorococcus marinus (strain MIT 9211).